Consider the following 158-residue polypeptide: uncharacterized protein (158 aa).

This is an uncharacterized protein from Ureaplasma parvum serovar 3 (strain ATCC 700970).